A 173-amino-acid polypeptide reads, in one-letter code: uncharacterized protein (173 aa).

The N-acetyltransferase domain occupies 2–171 (VTVREAKLED…PDLSALKTLL (170 aa)).

This sequence belongs to the acetyltransferase family.

This is an uncharacterized protein from Bacillus subtilis (strain 168).